A 673-amino-acid polypeptide reads, in one-letter code: Zinc finger protein 16 (673 aa).

The span at 1–10 shows a compositional bias: basic and acidic residues; that stretch reads MPSLRTRREE. The interval 1 to 42 is disordered; that stretch reads MPSLRTRREEAEMELSAPGPSPWTPAPQARVSDAPAVTHPGS. The tract at residues 62 to 210 is necessary for transcription activation; it reads YQQPDCDTRT…GVPTAESPLI (149 aa). The C2H2-type 1; degenerate zinc finger occupies 209-231; sequence LICNECGKTFRGNPDLIQRQIVH. A C2H2-type 2; degenerate zinc finger spans residues 237–259; it reads FMCDDCGKTFSQNSVLKNRHXSH. Residue K253 forms a Glycyl lysine isopeptide (Lys-Gly) (interchain with G-Cter in SUMO2) linkage. C2H2-type zinc fingers lie at residues 284–306, 312–334, 340–362, 368–390, 396–418, 424–446, and 452–474; these read YTCT…QKSH, YECN…QRIH, YVCS…HRTH, FECG…QRVH, YECN…HRVH, YKCS…RRIH, and HVCN…QIIH. Residues 332–364 are required for nuclear localization; it reads RIHSGEKPYVCSECGKAFRRSSNLIKHHRTHTG. The tract at residues 464–494 is required for nuclear localization; the sequence is SSVLRKHQIIHTGEKPYRCSVCGKAFSHSSA. Position 478 is an N6-acetyllysine (K478). 7 consecutive C2H2-type zinc fingers follow at residues 480 to 502, 508 to 530, 536 to 558, 564 to 586, 592 to 614, 620 to 642, and 648 to 670; these read YRCS…QGVH, YACH…QRVH, YECT…QRIH, HECN…QKVH, YTCV…QIIH, YKCS…QRIH, and YDCA…QLIH.

This sequence belongs to the krueppel C2H2-type zinc-finger protein family. In terms of assembly, interacts with INCA1; the interaction inhibits INCA1 activity and induces the cell cycle process.

The protein localises to the nucleus. Functionally, acts as a transcriptional activator. Promotes cell proliferation by facilitating the cell cycle phase transition from the S to G2/M phase. Involved in both the hemin- and phorbol myristate acetate (PMA)-induced erythroid and megakaryocytic differentiation, respectively. Also plays a role as an inhibitor of cell apoptosis. The protein is Zinc finger protein 16 (ZNF16) of Pan paniscus (Pygmy chimpanzee).